The primary structure comprises 349 residues: MAVGIVGWGAYIPRYRIKTREIAEAWGDDALRIRDMYLVEEKAVGYIDEDPVTMAVEASRDALIRAGVKPSEVGAVFAGTESKPYAVKPISSILIDALGLNRQVYSVDMEFACKAGSDAIINLMGLVKANSIKYGIAVGTDSSQGEPGEHLEYTVGTGAVAYVIGSSNLAAEIKYTYPYASDTPDFWRRDSSPYPVHGEGFTGEPAYFKHIIGAAKGLMDELGMKPNDFDYAVFHQPNARFPVRVAQMLGFPLEKVKPGIVVDLIGNTYNASALLGLAKVLEEAKPGAKIIVVTFGSGAGSNAFYIETTDQLPGKVKLARTIGEMLEDKVYIDYSLYLKYRKIIKMIHG.

2 residues coordinate (3S)-3-hydroxy-3-methylglutaryl-CoA: aspartate 29 and alanine 30. Glutamate 81 acts as the Proton donor/acceptor in catalysis. 4 residues coordinate (3S)-3-hydroxy-3-methylglutaryl-CoA: cysteine 113, threonine 154, threonine 202, and histidine 235. The active-site Acyl-thioester intermediate is cysteine 113. Residue histidine 235 is the Proton donor/acceptor of the active site. Arginine 240 lines the CoA pocket. (3S)-3-hydroxy-3-methylglutaryl-CoA contacts are provided by arginine 244, asparagine 267, and serine 297.

The protein belongs to the thiolase-like superfamily. Archaeal HMG-CoA synthase family. As to quaternary structure, interacts with acetoacetyl-CoA thiolase that catalyzes the precedent step in the pathway and with a DUF35 protein. The acetoacetyl-CoA thiolase/HMG-CoA synthase complex channels the intermediate via a fused CoA-binding site, which allows for efficient coupling of the endergonic thiolase reaction with the exergonic HMGCS reaction.

The enzyme catalyses acetoacetyl-CoA + acetyl-CoA + H2O = (3S)-3-hydroxy-3-methylglutaryl-CoA + CoA + H(+). It participates in metabolic intermediate biosynthesis; (R)-mevalonate biosynthesis; (R)-mevalonate from acetyl-CoA: step 2/3. Its function is as follows. Catalyzes the condensation of acetyl-CoA with acetoacetyl-CoA to form 3-hydroxy-3-methylglutaryl-CoA (HMG-CoA). Functions in the mevalonate (MVA) pathway leading to isopentenyl diphosphate (IPP), a key precursor for the biosynthesis of isoprenoid compounds that are building blocks of archaeal membrane lipids. The chain is Hydroxymethylglutaryl-CoA synthase from Caldivirga maquilingensis (strain ATCC 700844 / DSM 13496 / JCM 10307 / IC-167).